Reading from the N-terminus, the 759-residue chain is MGLADASGPRDTQALLSATQAMDLRRRDYHMERPLLNQEHLEELGRWGSAPRTHQWRTWLQCSRARAYALLLQHLPVLVWLPRYPVRDWLLGDLLSGLSVAIMQLPQGLAYALLAGLPPVFGLYSSFYPVFIYFLFGTSRHISVGTFAVMSVMVGSVTESLAPQALNDSMINETARDAARVQVASTLSVLVGLFQVGLGLIHFGFVVTYLSEPLVRGYTTAAAVQVFVSQLKYVFGLHLSSHSGPLSLIYTVLEVCWKLPQSKVGTVVTAAVAGVVLVVVKLLNDKLQQQLPMPIPGELLTLIGATGISYGMGLKHRFEVDVVGNIPAGLVPPVAPNTQLFSKLVGSAFTIAVVGFAIAISLGKIFALRHGYRVDSNQELVALGLSNLIGGIFQCFPVSCSMSRSLVQESTGGNSQVAGAISSLFILLIIVKLGELFHDLPKAVLAAIIIVNLKGMLRQLSDMRSLWKANRADLLIWLVTFTATILLNLDLGLVVAVIFSLLLVVVRTQMPHYSVLGQVPDTDIYRDVAEYSEAKEVRGVKVFRSSATVYFANAEFYSDALKQRCGVDVDFLISQKKKLLKKQEQLKLKQLQKEEKLRKQAASPKGASVSINVNTSLEDMRSNNVEDCKMMQVSSGDKMEDATANGQEDSKAPDGSTLKALGLPQPDFHSLILDLGALSFVDTVCLKSLKNIFHDFREIEVEVYMAACHSPVVSQLEAGHFFDASITKKHLFASVHDAVTFALQHPRPVPDSPVSVTRL.

The Cytoplasmic portion of the chain corresponds to 1-115; that stretch reads MGLADASGPR…PQGLAYALLA (115 aa). The helical transmembrane segment at 116 to 136 threads the bilayer; it reads GLPPVFGLYSSFYPVFIYFLF. The Extracellular portion of the chain corresponds to 137–186; sequence GTSRHISVGTFAVMSVMVGSVTESLAPQALNDSMINETARDAARVQVAST. N-linked (GlcNAc) asparagine glycans are attached at residues Asn167 and Asn172. Residues 187-207 traverse the membrane as a helical segment; that stretch reads LSVLVGLFQVGLGLIHFGFVV. At 208 to 263 the chain is on the cytoplasmic side; sequence TYLSEPLVRGYTTAAAVQVFVSQLKYVFGLHLSSHSGPLSLIYTVLEVCWKLPQSK. A helical transmembrane segment spans residues 264 to 284; that stretch reads VGTVVTAAVAGVVLVVVKLLN. At 285-293 the chain is on the extracellular side; that stretch reads DKLQQQLPM. A helical transmembrane segment spans residues 294–314; the sequence is PIPGELLTLIGATGISYGMGL. The Cytoplasmic segment spans residues 315 to 347; sequence KHRFEVDVVGNIPAGLVPPVAPNTQLFSKLVGS. A helical transmembrane segment spans residues 348–368; that stretch reads AFTIAVVGFAIAISLGKIFAL. The Extracellular portion of the chain corresponds to 369 to 379; that stretch reads RHGYRVDSNQE. A helical membrane pass occupies residues 380–400; sequence LVALGLSNLIGGIFQCFPVSC. Residues 401 to 416 lie on the Cytoplasmic side of the membrane; that stretch reads SMSRSLVQESTGGNSQ. A helical transmembrane segment spans residues 417-437; the sequence is VAGAISSLFILLIIVKLGELF. Residues 438–484 are Extracellular-facing; that stretch reads HDLPKAVLAAIIIVNLKGMLRQLSDMRSLWKANRADLLIWLVTFTAT. A helical membrane pass occupies residues 485–505; sequence ILLNLDLGLVVAVIFSLLLVV. Topologically, residues 506–759 are cytoplasmic; the sequence is VRTQMPHYSV…PDSPVSVTRL (254 aa). The STAS domain occupies 530–742; sequence EYSEAKEVRG…ASVHDAVTFA (213 aa). A phosphoserine; by PKC mark is found at Asn553 and Lys582. Position 616 is a phosphoserine (Ser616). The segment at 636–657 is disordered; the sequence is GDKMEDATANGQEDSKAPDGST. Residues Ser752 and Ser755 each carry the phosphoserine modification.

It belongs to the SLC26A/SulP transporter (TC 2.A.53) family. As to quaternary structure, interacts (via C-terminal domain) with PDZK1 (via C-terminal PDZ domain); the interaction induces chloride and oxalate exchange transport. Interacts with CFTR and SLC26A3. Interacts with AHCYL1; the interaction increases SLC26A6 activity. In terms of assembly, interacts with NHERF1 (via the PDZ domains) and NHERF2 (via the PDZ domains). Interacts (via C-terminal cytoplasmic domain) with CA2; the interaction stimulates chloride-bicarbonate exchange activity. Interacts with NHERF1 (via the PDZ domains) and NHERF2 (via the PDZ domains). Post-translationally, phosphorylated on serine residues by PKC; the phosphorylation disrupts interaction with carbonic anhydrase CA2 and reduces bicarbonate transport activity in a phorbol myristate acetate (PMA)-induced manner. Glycosylation at Asn-167 and Asn-172 positively regulates its chloride oxalate exchanger activity. As to expression, ubiquitous. Highest levels in kidney and pancreas. Lower expression in heart, skeletal muscle, liver and placenta. Also found in lung and brain. In terms of tissue distribution, ubiquitously expressed. Highest levels expressed in the kidney and pancreas. Expressed weakly in placenta, lung, liver and pancreas. As to expression, expressed in heart, brain, placenta, lung, liver, kidney, pancreas, spleen, thymus, prostate, testis and ovary.

It is found in the cell membrane. Its subcellular location is the apical cell membrane. The protein localises to the cytoplasmic vesicle membrane. It localises to the microsome. The protein resides in the basolateral cell membrane. The enzyme catalyses 2 hydrogencarbonate(in) + chloride(out) = 2 hydrogencarbonate(out) + chloride(in). It catalyses the reaction oxalate(in) + chloride(out) = oxalate(out) + chloride(in). The catalysed reaction is oxalate(in) + formate(out) = oxalate(out) + formate(in). It carries out the reaction oxalate(in) + sulfate(out) = oxalate(out) + sulfate(in). The enzyme catalyses 2 hydrogencarbonate(out) + sulfate(in) = 2 hydrogencarbonate(in) + sulfate(out). With respect to regulation, oxalate transport activity is inhibited by 4,4'-diisothiocyanatostilbene-2,2'-disulfonic acid (DIDS). Chloride, bicarbonate and sulfate transport activities are inhibited by 4,4'-diisothiocyanatostilbene-2,2'-disulfonic acid (DIDS). Functionally, apical membrane anion-exchanger with wide epithelial distribution that plays a role as a component of the pH buffering system for maintaining acid-base homeostasis. Acts as a versatile DIDS-sensitive inorganic and organic anion transporter that mediates the uptake of monovalent anions like chloride, bicarbonate, formate and hydroxyl ion and divalent anions like sulfate and oxalate. Functions in multiple exchange modes involving pairs of these anions, which include chloride-bicarbonate, chloride-oxalate, oxalate-formate, oxalate-sulfate and chloride-formate exchange. Apical membrane chloride-bicarbonate exchanger that mediates luminal chloride absorption and bicarbonate secretion by the small intestinal brush border membrane and contributes to intracellular pH regulation in the duodenal upper villous epithelium during proton-coupled peptide absorption, possibly by providing a bicarbonate import pathway. Also mediates intestinal chloride absorption and oxalate secretion, thereby preventing hyperoxaluria and calcium oxalate urolithiasis. Transepithelial oxalate secretion, chloride-formate, chloride-oxalate and chloride-bicarbonate transport activities in the duodenum are inhibited by PKC activation in a calcium-independent manner. The apical membrane chloride-bicarbonate exchanger also provides a major route for fluid and bicarbonate secretion into the proximal tubules of the kidney as well as into the proximal part of the interlobular pancreatic ductal tree, where it mediates electrogenic chloride-bicarbonate exchange with a chloride-bicarbonate stoichiometry of 1:2, and hence will dilute and alkalinize protein-rich acinar secretion. Also mediates the transcellular sulfate absorption and oxalate secretion across the apical membrane in the duodenum and the formate ion efflux at the apical brush border of cells in the proximal tubules of kidney. Plays a role in sperm capacitation by increasing intracellular pH. Its function is as follows. Apical membrane chloride-bicarbonate exchanger. Its association with carbonic anhydrase CA2 forms a bicarbonate transport metabolon; hence maximizes the local concentration of bicarbonate at the transporter site. In Homo sapiens (Human), this protein is Solute carrier family 26 member 6 (SLC26A6).